The chain runs to 353 residues: MIKVLIADDSALMRKMLKQILESDPEIQVVGAARDGEDVVIKAREYRPDVVTMDVNMPKQDGITALQYIVNEEICPVLMVSSLTQEGAMTTFEALELGAFDFVGKPGGTVSSSSDMKKVAAEIINKIRAAAQLKNRVVKRERLARGQRQPVVKKKAPPRPGREVTKAVAMGISTGGPKMIYEVVPLIPPDINAALFLVQHMPPNFTPAYVKRLNEACQIEVIEARAGIKVEPGVLYVGSGGRHLNLVKNTAGDVIIRLSSKPDHLFIPSVSVMMESVLKVFSNRTIGVLMTGMGNDGADSMVNIRQAGGITIAESEESAIVFGMPGDAIKRGGAEIVVPIWNIAREIIRAVNR.

The Response regulatory domain occupies 3–120; it reads KVLIADDSAL…SSSSDMKKVA (118 aa). Asp54 carries the 4-aspartylphosphate modification. The region spanning 158 to 353 is the CheB-type methylesterase domain; that stretch reads PRPGREVTKA…AREIIRAVNR (196 aa). Active-site residues include Ser173, His200, and Asp296.

It belongs to the CheB family. In terms of processing, phosphorylated by CheA. Phosphorylation of the N-terminal regulatory domain activates the methylesterase activity.

The protein localises to the cytoplasm. The catalysed reaction is [protein]-L-glutamate 5-O-methyl ester + H2O = L-glutamyl-[protein] + methanol + H(+). The enzyme catalyses L-glutaminyl-[protein] + H2O = L-glutamyl-[protein] + NH4(+). In terms of biological role, involved in chemotaxis. Part of a chemotaxis signal transduction system that modulates chemotaxis in response to various stimuli. Catalyzes the demethylation of specific methylglutamate residues introduced into the chemoreceptors (methyl-accepting chemotaxis proteins or MCP) by CheR. Also mediates the irreversible deamidation of specific glutamine residues to glutamic acid. The protein is Protein-glutamate methylesterase/protein-glutamine glutaminase 3 of Syntrophomonas wolfei subsp. wolfei (strain DSM 2245B / Goettingen).